The chain runs to 267 residues: Aspartate/glutamate leucyltransferase (267 aa).

The segment at 246 to 267 is disordered; that stretch reads EQEEQTRPLFRPSATGFSTGQE.

The protein belongs to the R-transferase family. Bpt subfamily.

The protein resides in the cytoplasm. The catalysed reaction is N-terminal L-glutamyl-[protein] + L-leucyl-tRNA(Leu) = N-terminal L-leucyl-L-glutamyl-[protein] + tRNA(Leu) + H(+). The enzyme catalyses N-terminal L-aspartyl-[protein] + L-leucyl-tRNA(Leu) = N-terminal L-leucyl-L-aspartyl-[protein] + tRNA(Leu) + H(+). Functions in the N-end rule pathway of protein degradation where it conjugates Leu from its aminoacyl-tRNA to the N-termini of proteins containing an N-terminal aspartate or glutamate. The polypeptide is Aspartate/glutamate leucyltransferase (Granulibacter bethesdensis (strain ATCC BAA-1260 / CGDNIH1)).